The primary structure comprises 365 residues: MREVNEMRALHDDLQVRVAGLRGYLDLEEKRGRLEEVQRELEDPTIWNNAEKAQELGRERSALEAVITPMDKLTASLADGGEMLELALSEQDAELLAAVDADLDTALSLVEKLEFQRMFSGAQDAANCFVDIQAGAGGTEAQDWAEMILRMYLHWAESHGFAAELVEVSEGEVAGIKSASIHVRGDHAFGWLRTETGVHRLVRKSPFDSGNRRHTSFASVFVYPEIDDSFEVDINPADLKVDTYRASGAGGQHVNKTDSAIRITHVPSGIVVACQTDRSQHKNRAEAMRMLRSKLYEMEMQKRAVEKQALEDSKSDIGWGHQIRSYVLDQSRIKDLRTGVEVGDTQKVLDGALDMFIEAALKAGL.

Glutamine 252 carries the N5-methylglutamine modification.

The protein belongs to the prokaryotic/mitochondrial release factor family. Methylated by PrmC. Methylation increases the termination efficiency of RF2.

It is found in the cytoplasm. Its function is as follows. Peptide chain release factor 2 directs the termination of translation in response to the peptide chain termination codons UGA and UAA. The polypeptide is Peptide chain release factor 2 (Acidithiobacillus ferrooxidans (strain ATCC 23270 / DSM 14882 / CIP 104768 / NCIMB 8455) (Ferrobacillus ferrooxidans (strain ATCC 23270))).